The chain runs to 446 residues: UDP-N-acetylmuramoylalanine--D-glutamate ligase (446 aa).

Position 112–118 (112–118) interacts with ATP; sequence GTNGKST.

This sequence belongs to the MurCDEF family.

The protein resides in the cytoplasm. The enzyme catalyses UDP-N-acetyl-alpha-D-muramoyl-L-alanine + D-glutamate + ATP = UDP-N-acetyl-alpha-D-muramoyl-L-alanyl-D-glutamate + ADP + phosphate + H(+). Its pathway is cell wall biogenesis; peptidoglycan biosynthesis. Functionally, cell wall formation. Catalyzes the addition of glutamate to the nucleotide precursor UDP-N-acetylmuramoyl-L-alanine (UMA). The chain is UDP-N-acetylmuramoylalanine--D-glutamate ligase from Baumannia cicadellinicola subsp. Homalodisca coagulata.